Consider the following 154-residue polypeptide: SsrA-binding protein (154 aa).

A disordered region spans residues 131–154 (DKRQDLKQKEAKRDIERAFKERQQ). Residues 132–154 (KRQDLKQKEAKRDIERAFKERQQ) show a composition bias toward basic and acidic residues.

The protein belongs to the SmpB family.

The protein resides in the cytoplasm. Required for rescue of stalled ribosomes mediated by trans-translation. Binds to transfer-messenger RNA (tmRNA), required for stable association of tmRNA with ribosomes. tmRNA and SmpB together mimic tRNA shape, replacing the anticodon stem-loop with SmpB. tmRNA is encoded by the ssrA gene; the 2 termini fold to resemble tRNA(Ala) and it encodes a 'tag peptide', a short internal open reading frame. During trans-translation Ala-aminoacylated tmRNA acts like a tRNA, entering the A-site of stalled ribosomes, displacing the stalled mRNA. The ribosome then switches to translate the ORF on the tmRNA; the nascent peptide is terminated with the 'tag peptide' encoded by the tmRNA and targeted for degradation. The ribosome is freed to recommence translation, which seems to be the essential function of trans-translation. This chain is SsrA-binding protein, found in Listeria innocua serovar 6a (strain ATCC BAA-680 / CLIP 11262).